The primary structure comprises 549 residues: Protein EPD1 (549 aa).

Residues 1–22 (MLLNSLFPSILAAATFVTSAAA) form the signal peptide. 2 N-linked (GlcNAc...) asparagine glycosylation sites follow: Asn40 and Asn59. Cys72 and Cys101 are disulfide-bonded. N-linked (GlcNAc...) asparagine glycosylation is found at Asn147 and Asn163. 5 cysteine pairs are disulfide-bonded: Cys214-Cys347, Cys232-Cys263, Cys369-Cys420, Cys378-Cys444, and Cys397-Cys402. Polar residues predominate over residues 336 to 356 (AESASGVSRTSCPTNTDNWEA). The segment at 336 to 361 (AESASGVSRTSCPTNTDNWEASTELP) is disordered. Asn383 is a glycosylation site (N-linked (GlcNAc...) asparagine). N-linked (GlcNAc...) asparagine glycosylation is found at Asn408 and Asn438. The tract at residues 479 to 519 (SVRTDTSEATTDSGSGSSNSGSASSSKSTSSSTSSGSSGSK) is disordered. Low complexity predominate over residues 487-519 (ATTDSGSGSSNSGSASSSKSTSSSTSSGSSGSK).

It belongs to the glycosyl hydrolase 72 family.

Its subcellular location is the cell membrane. The chain is Protein EPD1 (EPD1) from Candida maltosa (Yeast).